Here is a 441-residue protein sequence, read N- to C-terminus: Zinc finger and BTB domain-containing protein 8A (441 aa).

The BTB domain maps to 24–92 (CDCSILVEGK…VYSGKLSLTG (69 aa)). 2 stretches are compositionally biased toward polar residues: residues 146–170 (ERSSFYSSGWQDESSSPRSHLSPDQ) and 178–197 (KSWSKYNYHPASQRNTQQPL). Residues 146–252 (ERSSFYSSGW…SEEQAQMNAE (107 aa)) form a disordered region. A phosphoserine mark is found at Ser161 and Ser167. Residues Lys178, Lys182, and Lys199 each participate in a glycyl lysine isopeptide (Lys-Gly) (interchain with G-Cter in SUMO2) cross-link. A compositionally biased stretch (basic and acidic residues) spans 198 to 208 (TKHEQRKDSIK). Over residues 234–248 (SDSSSHASQSEEQAQ) the composition is skewed to low complexity. 2 consecutive C2H2-type zinc fingers follow at residues 282-304 (FKCPYCTHVVKRKADLKRHLRCH) and 310-333 (YPCQACGKRFSRLDHLSSHFRTIH). Lys437 is covalently cross-linked (Glycyl lysine isopeptide (Lys-Gly) (interchain with G-Cter in SUMO2)).

It is found in the nucleus. Functionally, may be involved in transcriptional regulation. This Bos taurus (Bovine) protein is Zinc finger and BTB domain-containing protein 8A (ZBTB8A).